A 60-amino-acid chain; its full sequence is Large ribosomal subunit protein bL32 (60 aa).

The tract at residues 1–60 (MAVQQNKKTPSKRGMHRSHDFLVAPQLSVEPTTGETHMRHHISPNGFYRGRKVLKTKNDE) is disordered. Residues 49–60 (RGRKVLKTKNDE) are compositionally biased toward basic residues.

This sequence belongs to the bacterial ribosomal protein bL32 family.

The protein is Large ribosomal subunit protein bL32 of Janthinobacterium sp. (strain Marseille) (Minibacterium massiliensis).